A 104-amino-acid chain; its full sequence is Large ribosomal subunit protein uL24 (104 aa).

This sequence belongs to the universal ribosomal protein uL24 family. Part of the 50S ribosomal subunit.

In terms of biological role, one of two assembly initiator proteins, it binds directly to the 5'-end of the 23S rRNA, where it nucleates assembly of the 50S subunit. Functionally, one of the proteins that surrounds the polypeptide exit tunnel on the outside of the subunit. In Azotobacter vinelandii (strain DJ / ATCC BAA-1303), this protein is Large ribosomal subunit protein uL24.